We begin with the raw amino-acid sequence, 675 residues long: Protein C-mannosyl-transferase DPY19L1 (675 aa).

Positions 1–22 (MEGRPPPEGRPPPRPRTGRAPR) are disordered. 11 helical membrane passes run 66-88 (LYYS…WMIM), 156-176 (ACFY…LFFI), 186-208 (LGGL…VMWT), 236-254 (LYRG…FMLP), 260-279 (FVLL…GYID), 286-303 (IIYI…LMFG), 309-325 (TSYY…ILAM), 334-354 (VSEL…TVIL), 414-434 (VVLV…WGVL), 449-469 (GELV…ILIM), and 491-511 (LFGW…ILAA).

Belongs to the dpy-19 family. As to expression, widely expressed.

It localises to the endoplasmic reticulum membrane. The enzyme catalyses L-tryptophyl-[protein] + a di-trans,poly-cis-dolichyl beta-D-mannosyl phosphate = C-alpha-D-mannosyl-L-tryptophyl-[protein] + a di-trans,poly-cis-dolichyl phosphate + H(+). It functions in the pathway protein modification; protein glycosylation. Functionally, C-mannosyltransferase that mediates the C-mannosylation tryptophan residues on target proteins. The reaction occurs on the luminal side of the endoplasmic reticulum and involves the transfer of a mannose unit from a dolichylphosphate mannose (Dol-P-Man) donor to an acceptor protein containing a WxxW consensus sequence. C-mannosylates the first two tryptophans in the WxxWxxWxxC motif in thrombospondin (TSP) type-1 of UNC5A. Regulates neurite extension during development. This Homo sapiens (Human) protein is Protein C-mannosyl-transferase DPY19L1 (DPY19L1).